We begin with the raw amino-acid sequence, 388 residues long: Valine--pyruvate aminotransferase (388 aa).

An N6-(pyridoxal phosphate)lysine modification is found at Lys234.

This sequence belongs to the class-I pyridoxal-phosphate-dependent aminotransferase family. It depends on pyridoxal 5'-phosphate as a cofactor.

The enzyme catalyses L-valine + pyruvate = 3-methyl-2-oxobutanoate + L-alanine. This chain is Valine--pyruvate aminotransferase, found in Mycobacterium tuberculosis (strain ATCC 25618 / H37Rv).